The following is an 898-amino-acid chain: DNA gyrase subunit A (898 aa).

2 disordered regions span residues 1-22 (MSDD…DDDS) and 36-56 (EEEK…EKEG). A Topo IIA-type catalytic domain is found at 97-562 (LPDARDGLKP…VMSSINNEDL (466 aa)). Catalysis depends on Tyr-185, which acts as the O-(5'-phospho-DNA)-tyrosine intermediate. The short motif at 589-595 (QRRGGVG) is the GyrA-box element.

The protein belongs to the type II topoisomerase GyrA/ParC subunit family. In terms of assembly, heterotetramer, composed of two GyrA and two GyrB chains. In the heterotetramer, GyrA contains the active site tyrosine that forms a transient covalent intermediate with DNA, while GyrB binds cofactors and catalyzes ATP hydrolysis.

The protein localises to the cytoplasm. The enzyme catalyses ATP-dependent breakage, passage and rejoining of double-stranded DNA.. A type II topoisomerase that negatively supercoils closed circular double-stranded (ds) DNA in an ATP-dependent manner to modulate DNA topology and maintain chromosomes in an underwound state. Negative supercoiling favors strand separation, and DNA replication, transcription, recombination and repair, all of which involve strand separation. Also able to catalyze the interconversion of other topological isomers of dsDNA rings, including catenanes and knotted rings. Type II topoisomerases break and join 2 DNA strands simultaneously in an ATP-dependent manner. The sequence is that of DNA gyrase subunit A from Metamycoplasma arthritidis (strain 158L3-1) (Mycoplasma arthritidis).